We begin with the raw amino-acid sequence, 300 residues long: DNA repair protein PprA (300 aa).

Threonine 88 carries the post-translational modification Phosphothreonine. Serine 128 is modified (phosphoserine). Residue threonine 160 is modified to Phosphothreonine.

Post-translationally, phosphorylated by RqkA in vitro. Phosphorylated primarily at Thr-88, and to a little extent at Ser-128 and Thr-160.

With respect to regulation, phosphorylation increases DNA binding affinity. Its function is as follows. dsDNA-binding protein that contributes to the ionizing radiation resistance of D.radiodurans. Plays a role in DNA repair and genome reconstitution, and is necessary for recovery from severe genomic fragmentation as a result of exposure to severe levels of ionizing radiation. In vitro, binds to double-stranded DNA carrying strand breaks and stimulates the DNA end-joining reaction catalyzed by DNA ligases. Thus, PprA plays a critical role in a non-homologous end-joining (NHEJ) pathway for the repair of radiation-induced DNA double-strands breaks. Cannot bind to dsDNA without strand breaks or single-stranded DNA. This Deinococcus radiodurans (strain ATCC 13939 / DSM 20539 / JCM 16871 / CCUG 27074 / LMG 4051 / NBRC 15346 / NCIMB 9279 / VKM B-1422 / R1) protein is DNA repair protein PprA (pprA).